The following is a 110-amino-acid chain: UPF0060 membrane protein ASA_2267 (110 aa).

A run of 4 helical transmembrane segments spans residues Ile7 to Trp27, Ser33 to Leu53, Ala63 to Ile83, and Leu87 to Pro107.

The protein belongs to the UPF0060 family.

The protein resides in the cell inner membrane. This is UPF0060 membrane protein ASA_2267 from Aeromonas salmonicida (strain A449).